A 314-amino-acid chain; its full sequence is Ribosomal protein L11 methyltransferase (314 aa).

4 residues coordinate S-adenosyl-L-methionine: Thr163, Gly184, Asp206, and Asn248.

The protein belongs to the methyltransferase superfamily. PrmA family.

The protein localises to the cytoplasm. It catalyses the reaction L-lysyl-[protein] + 3 S-adenosyl-L-methionine = N(6),N(6),N(6)-trimethyl-L-lysyl-[protein] + 3 S-adenosyl-L-homocysteine + 3 H(+). Its function is as follows. Methylates ribosomal protein L11. This is Ribosomal protein L11 methyltransferase from Lactobacillus delbrueckii subsp. bulgaricus (strain ATCC 11842 / DSM 20081 / BCRC 10696 / JCM 1002 / NBRC 13953 / NCIMB 11778 / NCTC 12712 / WDCM 00102 / Lb 14).